The chain runs to 218 residues: Small ribosomal subunit protein uS3 (218 aa).

In terms of domain architecture, KH type-2 spans 39-107 (IRDYIKSKLL…QISINIVEIK (69 aa)).

The protein belongs to the universal ribosomal protein uS3 family. In terms of assembly, part of the 30S ribosomal subunit. Forms a tight complex with proteins S10 and S14.

Binds the lower part of the 30S subunit head. Binds mRNA in the 70S ribosome, positioning it for translation. In Desulforudis audaxviator (strain MP104C), this protein is Small ribosomal subunit protein uS3.